The primary structure comprises 324 residues: NADH-ubiquinone oxidoreductase chain 1 (324 aa).

8 helical membrane-spanning segments follow: residues 9 to 29, 75 to 95, 106 to 126, 146 to 166, 177 to 197, 228 to 248, 259 to 279, and 299 to 319; these read LINPLAYIVPVLLAVAFLTLI, FLFLAAPVLALTLAMTLWAPM, LGILFILALSSLAVYSILGSG, ISYEVSLGLILLSVIIFSGGY, SIWLLIPAWPLAAMWYISTLA, LFFLAEYANILLMNTLSAVLF, ELTTINLMTKAALLSILFLWV, and FLPLTLAFVLWHTALPIALAG.

It belongs to the complex I subunit 1 family.

It localises to the mitochondrion inner membrane. It catalyses the reaction a ubiquinone + NADH + 5 H(+)(in) = a ubiquinol + NAD(+) + 4 H(+)(out). Its function is as follows. Core subunit of the mitochondrial membrane respiratory chain NADH dehydrogenase (Complex I) that is believed to belong to the minimal assembly required for catalysis. Complex I functions in the transfer of electrons from NADH to the respiratory chain. The immediate electron acceptor for the enzyme is believed to be ubiquinone. The chain is NADH-ubiquinone oxidoreductase chain 1 (MT-ND1) from Carassius auratus (Goldfish).